The following is a 2531-amino-acid chain: Highly reducing polyketide synthase ausV (2531 aa).

Residues 7 to 432 (STPIAIIGLS…GTNAHCVMET (426 aa)) form the Ketosynthase family 3 (KS3) domain. Residues C180, H315, and H355 each act as for beta-ketoacyl synthase activity in the active site. Residues 554 to 882 (FVFTGQGAQW…HHTLLESMGS (329 aa)) are malonyl-CoA:ACP transacylase (MAT) domain. Catalysis depends on S644, which acts as the For malonyltransferase activity. The segment at 939–1069 (HDLCGIRVED…GSVLAGTPSD (131 aa)) is N-terminal hotdog fold. The region spanning 939 to 1238 (HDLCGIRVED…LATLSVRSGD (300 aa)) is the PKS/mFAS DH domain. The tract at residues 940–1236 (DLCGIRVEDD…LELATLSVRS (297 aa)) is dehydratase (DH) domain. H971 functions as the Proton acceptor; for dehydratase activity in the catalytic mechanism. A C-terminal hotdog fold region spans residues 1087–1238 (YVETTPRQAY…LATLSVRSGD (152 aa)). D1152 (proton donor; for dehydratase activity) is an active-site residue. The tract at residues 1414-1592 (SSYLRLHARN…DTGFSGVDIS (179 aa)) is methyltransferase (CMet) domain. The segment at 1832–2133 (LRFVQDPAYW…SGGAKPGCSR (302 aa)) is enoyl reductase (ER) domain. The tract at residues 2156-2331 (HGRALVPDFH…AGVSLSLGFI (176 aa)) is ketoreductase (KR) domain. Residues 2444 to 2521 (AAATAVLDAL…ELARDLALRS (78 aa)) form the Carrier domain. S2481 bears the O-(pantetheine 4'-phosphoryl)serine mark.

Its pathway is secondary metabolite biosynthesis; terpenoid biosynthesis. In terms of biological role, highly reducing polyketide synthase; part of the gene cluster that mediates the biosynthesis of calidodehydroaustin, a fungal meroterpenoid. The first step of the pathway is the synthesis of 3,5-dimethylorsellinic acid by the polyketide synthase ausA. 3,5-dimethylorsellinic acid is then prenylated by the polyprenyl transferase ausN. Further epoxidation by the FAD-dependent monooxygenase ausM and cyclization by the probable terpene cyclase ausL lead to the formation of protoaustinoid A. Protoaustinoid A is then oxidized to spiro-lactone preaustinoid A3 by the combined action of the FAD-binding monooxygenases ausB and ausC, and the dioxygenase ausE. Acid-catalyzed keto-rearrangement and ring contraction of the tetraketide portion of preaustinoid A3 by ausJ lead to the formation of preaustinoid A4. The aldo-keto reductase ausK, with the help of ausH, is involved in the next step by transforming preaustinoid A4 into isoaustinone which is in turn hydroxylated by the P450 monooxygenase ausI to form austinolide. The cytochrome P450 monooxygenase ausG modifies austinolide to austinol. Austinol is further acetylated to austin by the O-acetyltransferase ausP, which spontaneously changes to dehydroaustin. The cytochrome P450 monooxygenase ausR then converts dehydroaustin is into 7-dehydrodehydroaustin. The hydroxylation catalyzed by ausR permits the O-acetyltransferase ausQ to add an additional acetyl group to the molecule, leading to the formation of acetoxydehydroaustin. The short chain dehydrogenase ausT catalyzes the reduction of the double bond present between carbon atoms 1 and 2 to convert 7-dehydrodehydroaustin into 1,2-dihydro-7-hydroxydehydroaustin. AusQ catalyzes not only an acetylation reaction but also the addition of the PKS ausV diketide product to 1,2-dihydro-7-hydroxydehydroaustin, forming precalidodehydroaustin. Finally, the iron/alpha-ketoglutarate-dependent dioxygenase converts precalidodehydroaustin into calidodehydroaustin. The polypeptide is Highly reducing polyketide synthase ausV (Aspergillus calidoustus).